Consider the following 392-residue polypeptide: tRNA (guanine-N(7)-)-methyltransferase (392 aa).

Residues glutamate 123, glutamate 148, and aspartate 175 each contribute to the S-adenosyl-L-methionine site. Residues lysine 201 and aspartate 231 each contribute to the substrate site.

Belongs to the class I-like SAM-binding methyltransferase superfamily. TrmB family.

It carries out the reaction guanosine(46) in tRNA + S-adenosyl-L-methionine = N(7)-methylguanosine(46) in tRNA + S-adenosyl-L-homocysteine. Its pathway is tRNA modification; N(7)-methylguanine-tRNA biosynthesis. Its function is as follows. Catalyzes the formation of N(7)-methylguanine at position 46 (m7G46) in tRNA. The protein is tRNA (guanine-N(7)-)-methyltransferase of Campylobacter jejuni subsp. jejuni serotype O:6 (strain 81116 / NCTC 11828).